The sequence spans 430 residues: Serine--tRNA ligase (430 aa).

235–237 (TAE) contributes to the L-serine binding site. ATP is bound by residues 266–268 (RRE) and Val-282. Glu-289 lines the L-serine pocket. An ATP-binding site is contributed by 353–356 (EASS). Residue Ser-389 coordinates L-serine.

The protein belongs to the class-II aminoacyl-tRNA synthetase family. Type-1 seryl-tRNA synthetase subfamily. As to quaternary structure, homodimer. The tRNA molecule binds across the dimer.

The protein resides in the cytoplasm. The enzyme catalyses tRNA(Ser) + L-serine + ATP = L-seryl-tRNA(Ser) + AMP + diphosphate + H(+). It carries out the reaction tRNA(Sec) + L-serine + ATP = L-seryl-tRNA(Sec) + AMP + diphosphate + H(+). The protein operates within aminoacyl-tRNA biosynthesis; selenocysteinyl-tRNA(Sec) biosynthesis; L-seryl-tRNA(Sec) from L-serine and tRNA(Sec): step 1/1. Functionally, catalyzes the attachment of serine to tRNA(Ser). Is also able to aminoacylate tRNA(Sec) with serine, to form the misacylated tRNA L-seryl-tRNA(Sec), which will be further converted into selenocysteinyl-tRNA(Sec). The sequence is that of Serine--tRNA ligase from Chlorobium luteolum (strain DSM 273 / BCRC 81028 / 2530) (Pelodictyon luteolum).